A 602-amino-acid chain; its full sequence is SAGA complex subunit SPT8 (602 aa).

The disordered stretch occupies residues 1–141 (MDEVDDILIN…REASSSTHEA (141 aa)). Acidic residues-rich tracts occupy residues 14–23 (VDDEEDDEEM) and 36–75 (EGND…DGED). Thr-85 is subject to Phosphothreonine. Residues Ser-108, Ser-123, and Ser-131 each carry the phosphoserine modification. 2 WD repeats span residues 173 to 212 (PIQT…EGKL) and 305 to 346 (GHTQ…NEFK). The tract at residues 366–418 (VSGNVNSGKENENADDDMDSLFGDEDEDEKQDAGNEPVETGDGSNGEENKEQI) is disordered. Positions 378–395 (NADDDMDSLFGDEDEDEK) are enriched in acidic residues. WD repeat units follow at residues 415–454 (KEQI…SPAL), 506–544 (SISG…DASN), and 560–600 (HHGG…YDID). Residue Ser-451 is modified to Phosphoserine.

It belongs to the WD repeat SPT8 family. As to quaternary structure, component of the 1.8 MDa SAGA (Spt-Ada-Gcn5 acetyltransferase) complex, which is composed of 19 subunits TRA1, SPT7, TAF5, NGG1/ADA3, SGF73, SPT20/ADA5, SPT8, TAF12, TAF6, HFI1/ADA1, UBP8, GCN5, ADA2, SPT3, SGF29, TAF10, TAF9, SGF11 and SUS1. The SAGA complex is composed of 4 modules, namely the HAT (histone acetyltransferase) module (GCN5, ADA2, NGG1/ADA3 and SGF29), the DUB (deubiquitinating) module (UBP8, SGF11, SGF73 and SUS1), the core or TAF (TBP-associated factor) module (TAF5, TAF6, TAF9, TAF10 and TAF12), and the Tra1 or SPT (Suppressor of Ty) module (TRA1, HFI1/ADA1, SPT3, SPT7, SPT8 and SPT20/ADA5). The Tra1/SPT module binds activators, the core module recruits TBP (TATA-binding protein), the HAT module contains the histone H3 acetyltransferase GCN5, and the DUB module comprises the histone H2B deubiquitinase UBP8.

It is found in the nucleus. Functionally, component of the transcription coactivator SAGA complex. SAGA acts as a general cofactor required for essentially all RNA polymerase II transcription. At the promoters, SAGA is required for transcription pre-initiation complex (PIC) recruitment. It influences RNA polymerase II transcriptional activity through different activities such as TBP interaction (via core/TAF module) and promoter selectivity, interaction with transcription activators (via Tra1/SPT module), and chromatin modification through histone acetylation (via HAT module) and deubiquitination (via DUB module). SAGA preferentially acetylates histones H3 (to form H3K9ac, H3K14ac, H3K18ac and H3K23ac) and H2B and deubiquitinates histone H2B. SAGA interacts with DNA via upstream activating sequences (UASs). During SAGA-mediated transcriptional inhibition, SPT3 and SPT8 prevent binding of TBP to the TATA box. The chain is SAGA complex subunit SPT8 (SPT8) from Saccharomyces cerevisiae (strain ATCC 204508 / S288c) (Baker's yeast).